A 228-amino-acid polypeptide reads, in one-letter code: Immunogenic protein MPB64 (228 aa).

Positions 1–23 (MRIKIFMLVTAVVLLCCSGVATA) are cleaved as a signal peptide.

Belongs to the RsiV family.

Its subcellular location is the secreted. This chain is Immunogenic protein MPB64 (mpb64), found in Mycobacterium bovis (strain ATCC BAA-935 / AF2122/97).